The following is an 82-amino-acid chain: Cytochrome b-c1 complex subunit 8 (82 aa).

Over 1–39 (MGREFGNLTRMRHVISYSLSPFEQRAHPHVFTKGIPNVL) the chain is Mitochondrial matrix. Phosphoserine is present on serine 16. At lysine 33 the chain carries N6-acetyllysine; alternate. N6-succinyllysine; alternate is present on lysine 33. Residues 40-68 (RRFRESFFRVAPQFVVFYLIYTWGTEEFE) traverse the membrane as a helical segment. At 69 to 82 (RSKRKNPAAYENDK) the chain is on the mitochondrial intermembrane side.

This sequence belongs to the UQCRQ/QCR8 family. Component of the ubiquinol-cytochrome c oxidoreductase (cytochrome b-c1 complex, complex III, CIII), a multisubunit enzyme composed of 11 subunits. The complex is composed of 3 respiratory subunits cytochrome b, cytochrome c1 and Rieske protein UQCRFS1, 2 core protein subunits UQCRC1/QCR1 and UQCRC2/QCR2, and 6 low-molecular weight protein subunits UQCRH/QCR6, UQCRB/QCR7, UQCRQ/QCR8, UQCR10/QCR9, UQCR11/QCR10 and subunit 9, the cleavage product of Rieske protein UQCRFS1. The complex exists as an obligatory dimer and forms supercomplexes (SCs) in the inner mitochondrial membrane with NADH-ubiquinone oxidoreductase (complex I, CI) and cytochrome c oxidase (complex IV, CIV), resulting in different assemblies (supercomplex SCI(1)III(2)IV(1) and megacomplex MCI(2)III(2)IV(2)). Interacts with UQCC6.

It is found in the mitochondrion inner membrane. Functionally, component of the ubiquinol-cytochrome c oxidoreductase, a multisubunit transmembrane complex that is part of the mitochondrial electron transport chain which drives oxidative phosphorylation. The respiratory chain contains 3 multisubunit complexes succinate dehydrogenase (complex II, CII), ubiquinol-cytochrome c oxidoreductase (cytochrome b-c1 complex, complex III, CIII) and cytochrome c oxidase (complex IV, CIV), that cooperate to transfer electrons derived from NADH and succinate to molecular oxygen, creating an electrochemical gradient over the inner membrane that drives transmembrane transport and the ATP synthase. The cytochrome b-c1 complex catalyzes electron transfer from ubiquinol to cytochrome c, linking this redox reaction to translocation of protons across the mitochondrial inner membrane, with protons being carried across the membrane as hydrogens on the quinol. In the process called Q cycle, 2 protons are consumed from the matrix, 4 protons are released into the intermembrane space and 2 electrons are passed to cytochrome c. This is Cytochrome b-c1 complex subunit 8 (UQCRQ) from Pongo abelii (Sumatran orangutan).